We begin with the raw amino-acid sequence, 485 residues long: ATP synthase subunit beta 1 (485 aa).

Position 157–164 (157–164 (GGAGVGKT)) interacts with ATP.

It belongs to the ATPase alpha/beta chains family. In terms of assembly, F-type ATPases have 2 components, CF(1) - the catalytic core - and CF(0) - the membrane proton channel. CF(1) has five subunits: alpha(3), beta(3), gamma(1), delta(1), epsilon(1). CF(0) has three main subunits: a(1), b(2) and c(9-12). The alpha and beta chains form an alternating ring which encloses part of the gamma chain. CF(1) is attached to CF(0) by a central stalk formed by the gamma and epsilon chains, while a peripheral stalk is formed by the delta and b chains.

It is found in the cell inner membrane. It carries out the reaction ATP + H2O + 4 H(+)(in) = ADP + phosphate + 5 H(+)(out). Produces ATP from ADP in the presence of a proton gradient across the membrane. The catalytic sites are hosted primarily by the beta subunits. The polypeptide is ATP synthase subunit beta 1 (Psychromonas ingrahamii (strain DSM 17664 / CCUG 51855 / 37)).